Consider the following 413-residue polypeptide: Histidine--tRNA ligase (413 aa).

This sequence belongs to the class-II aminoacyl-tRNA synthetase family. In terms of assembly, homodimer.

It is found in the cytoplasm. The enzyme catalyses tRNA(His) + L-histidine + ATP = L-histidyl-tRNA(His) + AMP + diphosphate + H(+). This chain is Histidine--tRNA ligase, found in Geobacter metallireducens (strain ATCC 53774 / DSM 7210 / GS-15).